We begin with the raw amino-acid sequence, 273 residues long: 4-hydroxy-tetrahydrodipicolinate reductase (273 aa).

12–17 (GAAGRM) lines the NAD(+) pocket. NADP(+) is bound at residue Arg39. NAD(+)-binding positions include 102–104 (GTT) and 126–129 (AANF). The Proton donor/acceptor role is filled by His159. His160 provides a ligand contact to (S)-2,3,4,5-tetrahydrodipicolinate. Lys163 functions as the Proton donor in the catalytic mechanism. Residue 169–170 (GT) coordinates (S)-2,3,4,5-tetrahydrodipicolinate.

This sequence belongs to the DapB family. Homotetramer.

It is found in the cytoplasm. The catalysed reaction is (S)-2,3,4,5-tetrahydrodipicolinate + NAD(+) + H2O = (2S,4S)-4-hydroxy-2,3,4,5-tetrahydrodipicolinate + NADH + H(+). The enzyme catalyses (S)-2,3,4,5-tetrahydrodipicolinate + NADP(+) + H2O = (2S,4S)-4-hydroxy-2,3,4,5-tetrahydrodipicolinate + NADPH + H(+). The protein operates within amino-acid biosynthesis; L-lysine biosynthesis via DAP pathway; (S)-tetrahydrodipicolinate from L-aspartate: step 4/4. Functionally, catalyzes the conversion of 4-hydroxy-tetrahydrodipicolinate (HTPA) to tetrahydrodipicolinate. The chain is 4-hydroxy-tetrahydrodipicolinate reductase from Erwinia tasmaniensis (strain DSM 17950 / CFBP 7177 / CIP 109463 / NCPPB 4357 / Et1/99).